A 163-amino-acid polypeptide reads, in one-letter code: Ubiquitin-like protein 1-ribosomal protein eS31 fusion protein (163 aa).

Residues 1–70 (MVFVKTLNRT…IYVNLELLGG (70 aa)) form the Ubiquitin-like domain. Gly70 participates in a covalent cross-link: Glycyl lysine isopeptide (Gly-Lys) (interchain with K-? in acceptor proteins). The C4-type zinc-finger motif lies at 115 to 138 (CQQPSCGGGVFMAQHANRHYCGRC).

This sequence in the N-terminal section; belongs to the ubiquitin family. It in the C-terminal section; belongs to the eukaryotic ribosomal protein eS31 family.

The sequence is that of Ubiquitin-like protein 1-ribosomal protein eS31 fusion protein (ubl-1) from Caenorhabditis briggsae.